Reading from the N-terminus, the 300-residue chain is Cyclic nucleotide synthase CdnE01 (300 aa).

Mg(2+)-binding residues include D63, D65, and D137.

Belongs to the CD-NTase family. E01 subfamily. It depends on Mg(2+) as a cofactor.

Its activity is regulated as follows. Binds to and probably activated by a virus-derived, approximately 400 nucleotide RNA (called CBASS-activating bacteriophage RNA, cabRNA) that begins in the viral terminase subunit terS and extends into terL, as well as by a shorter RNA with part of the cabRNA sequence able to form a hairpin. RNA secondary and/or tertiary structure, as well as viral infection itself, are important for CdnE activation. Functionally, cyclic nucleotide synthase (second messenger synthase) of a CBASS antivirus system. CBASS (cyclic oligonucleotide-based antiphage signaling system) provides immunity against bacteriophage. The CD-NTase protein synthesizes cyclic nucleotides in response to infection; these serve as specific second messenger signals. The signals activate a diverse range of effectors, leading to bacterial cell death and thus abortive phage infection. A type I-B CBASS system. Protects S.aureus against phage infection. When the CBASS operon (cdnE and the following gene) is introduced in S.aureus strain RN4220 there is strong protection against lytic DNA phages 80alpha-vir and phi-NM1-gamma-6 but little to no protection against phages phi-NM4-gamma-4 or phi-12-gamma-3. The protein is Cyclic nucleotide synthase CdnE01 of Staphylococcus haemolyticus.